A 264-amino-acid chain; its full sequence is 3-methyl-2-oxobutanoate hydroxymethyltransferase (264 aa).

Asp45 and Asp84 together coordinate Mg(2+). 3-methyl-2-oxobutanoate-binding positions include 45–46, Asp84, and Lys112; that span reads DS. Glu114 contributes to the Mg(2+) binding site. Glu181 (proton acceptor) is an active-site residue.

Belongs to the PanB family. In terms of assembly, homodecamer; pentamer of dimers. The cofactor is Mg(2+).

It is found in the cytoplasm. The catalysed reaction is 3-methyl-2-oxobutanoate + (6R)-5,10-methylene-5,6,7,8-tetrahydrofolate + H2O = 2-dehydropantoate + (6S)-5,6,7,8-tetrahydrofolate. It functions in the pathway cofactor biosynthesis; (R)-pantothenate biosynthesis; (R)-pantoate from 3-methyl-2-oxobutanoate: step 1/2. In terms of biological role, catalyzes the reversible reaction in which hydroxymethyl group from 5,10-methylenetetrahydrofolate is transferred onto alpha-ketoisovalerate to form ketopantoate. This Tolumonas auensis (strain DSM 9187 / NBRC 110442 / TA 4) protein is 3-methyl-2-oxobutanoate hydroxymethyltransferase.